The following is a 515-amino-acid chain: Pescadillo homolog (515 aa).

Residues 270 to 327 (EVLAALNHTLKIIQTQEEDLEVDEFPIDPNSEDAEAIQAQKEEETKLERLKNLFSECK) are a coiled coil. Residues 318–411 (RLKNLFSECK…KLLPVEEYFP (94 aa)) enclose the BRCT domain. A disordered region spans residues 477-515 (RLYEKIMHSKKKKRSEVRKLESKRKVHDEEKAKKKLKSS). The segment covering 484–501 (HSKKKKRSEVRKLESKRK) has biased composition (basic residues).

It belongs to the pescadillo family.

It localises to the nucleus. It is found in the nucleolus. The protein resides in the nucleoplasm. Its function is as follows. Required for maturation of ribosomal RNAs and formation of the large ribosomal subunit. This is Pescadillo homolog from Nematostella vectensis (Starlet sea anemone).